Here is a 38-residue protein sequence, read N- to C-terminus: Large ribosomal subunit protein bL36 (38 aa).

Belongs to the bacterial ribosomal protein bL36 family.

The sequence is that of Large ribosomal subunit protein bL36 from Azotobacter vinelandii (strain DJ / ATCC BAA-1303).